The chain runs to 418 residues: 1-acylglycerol-3-phosphate O-acyltransferase (418 aa).

Residues 121–251 form the AB hydrolase-1 domain; sequence PTLVMVHGYG…RATWKGAVLN (131 aa). Positions 197–201 match the GXSXG motif; that stretch reads GHSFG. Residues 379–384 carry the HXXXXD motif motif; sequence HFVFID.

This sequence belongs to the peptidase S33 family. ABHD4/ABHD5 subfamily.

The protein resides in the cytoplasm. The enzyme catalyses a 1-acyl-sn-glycero-3-phosphate + an acyl-CoA = a 1,2-diacyl-sn-glycero-3-phosphate + CoA. Lysophosphatidic acid acyltransferase which functions in phosphatidic acid biosynthesis. Is highly specific for lysophosphatidic acid and able to use different acyl-CoA donors. May regulate neutral lipid accumulation and participate in the regulation of lipid turnover in vegetative cells. Possesses additional triacylglycerol lipase and phospholipase A2 activities in vitro. Is not active as esterase or lysophospholipase. This is 1-acylglycerol-3-phosphate O-acyltransferase from Arabidopsis thaliana (Mouse-ear cress).